The chain runs to 214 residues: uncharacterized protein (214 aa).

5 consecutive transmembrane segments (helical) span residues 18–38 (LLLLCIGGFYALGVSLSNTFV), 51–71 (DLALYNLAVVTMQPLTFIVAG), 80–100 (ILVLRLGVSCLAVFFVTVLLV), 108–128 (LLVLGALLGVGYGFYWLAFNV), and 145–165 (FFGVLTSSAGMIGPIAAGYII).

Its subcellular location is the cell membrane. This is an uncharacterized protein from Geobacillus stearothermophilus (Bacillus stearothermophilus).